The chain runs to 427 residues: Putative dipeptidase MCYG_02918 (427 aa).

The N-terminal stretch at 1–29 (MAPERRSRLSDAGILVSLLALTSLVPVQA) is a signal peptide. The Zn(2+) site is built by histidine 55, aspartate 57, and glutamate 167. A disulfide bridge links cysteine 106 with cysteine 196. Histidine 194 contributes to the substrate binding site. Zn(2+)-binding residues include histidine 238 and histidine 259. Substrate contacts are provided by arginine 270 and aspartate 330. Asparagine 402 is a glycosylation site (N-linked (GlcNAc...) asparagine).

It belongs to the metallo-dependent hydrolases superfamily. Peptidase M19 family. Zn(2+) is required as a cofactor.

The enzyme catalyses an L-aminoacyl-L-amino acid + H2O = 2 an L-alpha-amino acid. Hydrolyzes a wide range of dipeptides. This chain is Putative dipeptidase MCYG_02918, found in Arthroderma otae (strain ATCC MYA-4605 / CBS 113480) (Microsporum canis).